Here is a 401-residue protein sequence, read N- to C-terminus: 8-amino-7-oxononanoate synthase (401 aa).

Arg-24 is a binding site for substrate. 111–112 (GF) serves as a coordination point for pyridoxal 5'-phosphate. Residue His-137 coordinates substrate. 3 residues coordinate pyridoxal 5'-phosphate: Ser-183, His-211, and Thr-240. Position 243 is an N6-(pyridoxal phosphate)lysine (Lys-243). Position 357 (Thr-357) interacts with substrate.

It belongs to the class-II pyridoxal-phosphate-dependent aminotransferase family. BioF subfamily. As to quaternary structure, homodimer. It depends on pyridoxal 5'-phosphate as a cofactor.

It catalyses the reaction 6-carboxyhexanoyl-[ACP] + L-alanine + H(+) = (8S)-8-amino-7-oxononanoate + holo-[ACP] + CO2. It participates in cofactor biosynthesis; biotin biosynthesis. Functionally, catalyzes the decarboxylative condensation of pimeloyl-[acyl-carrier protein] and L-alanine to produce 8-amino-7-oxononanoate (AON), [acyl-carrier protein], and carbon dioxide. In Xanthomonas campestris pv. campestris (strain B100), this protein is 8-amino-7-oxononanoate synthase.